The primary structure comprises 326 residues: Serine hydrolase-like protein (326 aa).

In terms of domain architecture, AB hydrolase-1 spans 44–155; that stretch reads PVLCLHGWAD…FLPTEVTDMF (112 aa). The active site involves S118.

It belongs to the AB hydrolase superfamily.

Its function is as follows. Probable serine hydrolase. This Danio rerio (Zebrafish) protein is Serine hydrolase-like protein (serhl).